The sequence spans 660 residues: MKTVVFAYHDMGCLGIEALLAAGYEISAIFTHTDNPGEKAFYGSVARLAAERGIPVYAPDNVNHPLWVERIAQLSPEVIFSFYYRHLICDEILQLAPRGAFNLHGSLLPKYRGRAPLNWVLVNGETETGVTLHRMVKRADAGAIVAQLRVAIAPDDIAITLHHKLCHAARQLLEQTLPAIKHGNILEIAQRENEATCFGRRTPDDSFLEWHKPASVLHNMVRAVADPWPGAFSYVGNQKFTVWSSRVHPHASKAQPGSVISVAPLLIACGDGALEIVTGQTGDGITMQGSQLAQTLGLVQGSRLNSQPACAARRRTRVLILGVNGFIGNHLTERLLREDHYEVYGLDIGSDAISRFLNHPHFHFVEGDISIHSEWIEYHVKKCDVVLPLVAIATPIEYTRNPLRVFELDFEENLRIIRYCVKYRKRIIFPSTSEVYGMCSDKYFDEDHSNLIVGPVNKPRWIYSVSKQLIDRVIWAYGEKEGLQFTLFRPFNWMGPRLDNLNAARIGSSRAITQLILNLVEGSPIKLIDGGKQKRCFTDIRDGIEALYRIIENAGNRCDGEIINIGNPENEASIEELGEMLLASFEKHPLRHYFPPFAGFRVVESSSYYGKGYQDVEHRKPSIRNARRCLDWEPKIDMQETIDETLDFFLRTVDLTDKPS.

The formyltransferase ArnAFT stretch occupies residues 1 to 304; sequence MKTVVFAYHD…TLGLVQGSRL (304 aa). 86-88 serves as a coordination point for (6R)-10-formyltetrahydrofolate; the sequence is HLI. The active-site Proton donor; for formyltransferase activity is the histidine 104. (6R)-10-formyltetrahydrofolate contacts are provided by residues arginine 114 and 136 to 140; that span reads VKRAD. The tract at residues 314–660 is dehydrogenase ArnADH; sequence RRTRVLILGV…RTVDLTDKPS (347 aa). NAD(+) is bound by residues aspartate 347 and 368-369; that span reads DI. UDP-alpha-D-glucuronate is bound by residues alanine 393, tyrosine 398, and 432–433; that span reads TS. Catalysis depends on glutamate 434, which acts as the Proton acceptor; for decarboxylase activity. Residues arginine 460, asparagine 492, 526–535, and tyrosine 613 each bind UDP-alpha-D-glucuronate; that span reads KLIDGGKQKR. The active-site Proton donor; for decarboxylase activity is the arginine 619.

The protein in the N-terminal section; belongs to the Fmt family. UDP-L-Ara4N formyltransferase subfamily. It in the C-terminal section; belongs to the NAD(P)-dependent epimerase/dehydratase family. UDP-glucuronic acid decarboxylase subfamily. As to quaternary structure, homohexamer, formed by a dimer of trimers.

The catalysed reaction is UDP-alpha-D-glucuronate + NAD(+) = UDP-beta-L-threo-pentopyranos-4-ulose + CO2 + NADH. It catalyses the reaction UDP-4-amino-4-deoxy-beta-L-arabinose + (6R)-10-formyltetrahydrofolate = UDP-4-deoxy-4-formamido-beta-L-arabinose + (6S)-5,6,7,8-tetrahydrofolate + H(+). It participates in nucleotide-sugar biosynthesis; UDP-4-deoxy-4-formamido-beta-L-arabinose biosynthesis; UDP-4-deoxy-4-formamido-beta-L-arabinose from UDP-alpha-D-glucuronate: step 1/3. Its pathway is nucleotide-sugar biosynthesis; UDP-4-deoxy-4-formamido-beta-L-arabinose biosynthesis; UDP-4-deoxy-4-formamido-beta-L-arabinose from UDP-alpha-D-glucuronate: step 3/3. The protein operates within bacterial outer membrane biogenesis; lipopolysaccharide biosynthesis. Bifunctional enzyme that catalyzes the oxidative decarboxylation of UDP-glucuronic acid (UDP-GlcUA) to UDP-4-keto-arabinose (UDP-Ara4O) and the addition of a formyl group to UDP-4-amino-4-deoxy-L-arabinose (UDP-L-Ara4N) to form UDP-L-4-formamido-arabinose (UDP-L-Ara4FN). The modified arabinose is attached to lipid A and is required for resistance to polymyxin and cationic antimicrobial peptides. In Escherichia coli O127:H6 (strain E2348/69 / EPEC), this protein is Bifunctional polymyxin resistance protein ArnA.